The sequence spans 216 residues: Putative cat eye syndrome critical region protein 9 (216 aa).

Residues M1 to A23 form the signal peptide. An N-linked (GlcNAc...) asparagine glycan is attached at N148.

As to expression, ubiquitously expressed with higher expression in heart.

It is found in the secreted. This is Putative cat eye syndrome critical region protein 9 (CECR9) from Homo sapiens (Human).